Consider the following 2049-residue polypeptide: MVTVPQTILYFGDQTDSWVDSLDQLYRQAATIPWLQTFLDDLVKVFKEESRGMDRALQDSVGEYSTLLDLADRYRHGTDEIGMVRAVLLHAARGGMLLQWVKKESQLVDLNGSKPEALGISGGLTNLAALAISTDFESLYDAVIEAARIFVRLCRFTSVRSRAMEDRPGVWGWAVLGITPEELSKVLEQFQSSMGIPAIKRAKVGVTGDRWSTVIGPPSVLDLFIHQCPAVRNLPKNELSIHALQHTVTVTEADLDFIVGSAELLSHPIVPDFKVWGMDDPVASYQNWGEMLRAIVTQVLSKPLDITKVIAQLNTHLGPRHVDVRVIGPSSHTPYLASSLKAAGSKAIFQTDKTLEQLQPKKLPPGRIAIVGMAGRGPGCENVDEFWDVIMAKQDRCEEIPKDRFDINEFYCTEHGEGCTTTTKYGCFMNKPGNFDSRFFHVSPREALLMDPGHRQFMMSTYEALETAGYSDGQTRDVDPNRIAAFYGQSNDDWHMVSHYTLGCDAYTLQGAQRAFGAGRIAFHFKWEGPTYSLDSACASTSSAIHLACVSLLSKDVDMAVVGAANVVGYPHSWTSLSKSGVLSDTGNCKTYCDDADGYCRADFVGSVVLKRLEDAVEQNDNILAVVAGSGRNHSGNSSSITTSDAGAQERLFHKIMHSARVSPDEISYVEMHGTGTQIGDPAEMSAVTNVFRKRKANNPLTVGGIKANVGHAEASAGMASLLKCIQMFQKDIMPPQARMPHTLNPKYPSLSELNIHIPSEPKEFKAIGERPRRILLNNFDAAGGNASLILEDFPSTVKENADPRPSHVIVSSAKTQSSYHANKRNLLKWLRKNKDAKLEDVAYTTTARRMHHPLRFSCSASTTEELISKLEADTADATASRGSPVVFVFTGQGSHYAGMGAELYKTCPAFREEVNLCASISEEHGFPPYVDIITNKDVDITTKDTMQTQLAVVTLEIALAAFWKASGIQPSAVMGHSLGEYVALQVAGVLSLADLLYLVGNRARLLLERCEADTCAMLAVSSSAASIRELIDQRPQSSFEIACKNSPNATVISGSTDEISELQSSFTASRARALSVPYGFHSFQMDPMLEDYIVLAGGVTYSPPKIPVASTLLASIVESSGVFNASYLGQQTRQAVDFVGALGALKEKFADPLWLEIGPSQICNSFVRATLSPSPGKILSTLEANTNPWASIAKCLAGAYKDGVAVDWLAVHAPFKGGLKLVKLPAYAWDLKDFWIVYSEANKAARALAPAPSFETQRISTCAQQIVEESSSPSLHVSARAAISDPGFMALVDGHRMRDVSICPGSVFCEAGLAVSKYALKYSGRKDTVETRLTINNLSLKRPLTKSLVGTDGELLTTVVADKASSDTLQVSWKASSSHASYDLGSCEITICDAQTLQTSWNRSSYFVKARMNELIKNVKSGNGHRMLPSILYTLFASTVDYDPTFKSVKEAFISNEFDEAAAEVVLQKNPAGTQFFASPYWGESVVHLAGFLVNSNPARKTASQTTFMMQSLESVEQTADLEAGRTYYTYARVLHEEEDTVSCDLFVFDSEKMVMQCSGLSFHEVSNNVLDRLLGKASPPVKQVSHQKAPVLVPAESKPALKAAVEAAPKAPEPVKTEVKKISSSESELFHTILESIAKETGTQVSDFTDDMELAELGVDSIMGIEIAAGVSSRTGLDVLLPSFVVDYPTIGDLRNEFARSSTSTPPSKTFSEFSIVDATPESTRSSSRAPSEKKEPAPASEKSEELVIVPSAVVEDSSPLPSARITLIQGRSSSGKQPFYLIADGAGSIATYIHLAPFKDKRPVYGIDSPFLRCPSRLTTQVGIEGVAKIIFEALIKCQPEGPFDLGGFSGGAMLSYEVSRQLAAAGRVVSSLLLIDMCSPRPLGVEDTIEVGWKVYETIASQDKLWNASSNTQQHLKAVFACVAAYHPPPITPAQRPKRTAIIWAKKGMVDRCSRDEKVMKFLADKGIPTESYPGFMEDPKLGAVAWGLPHKSAADLGPNGWDKFLGETLCLSIDSDHLDMPMPGHVHLLQAAMEESFKYFSEAN.

Positions leucine 9–histidine 246 are N-terminal acylcarrier protein transacylase (SAT) domain. The Ketosynthase family 3 (KS3) domain maps to proline 365 to aspartate 793. Active-site for beta-ketoacyl synthase activity residues include cysteine 538, histidine 673, and histidine 712. The segment at valine 887–leucine 1146 is malonyl-CoA:ACP transacylase (MAT) domain. Residue serine 978 is the For acyl/malonyl transferase activity of the active site. The tract at residues glutamine 1265–arginine 1404 is N-terminal hotdog fold. The PKS/mFAS DH domain occupies glutamine 1265–aspartate 1573. Positions glutamate 1269–leucine 1572 are product template (PT) domain. The segment at glycine 1425 to aspartate 1573 is C-terminal hotdog fold. The Carrier domain maps to serine 1626 to serine 1704. The residue at position 1663 (serine 1663) is an O-(pantetheine 4'-phosphoryl)serine. The segment at phenylalanine 1700–glutamate 1747 is disordered. Residues serine 1703 to serine 1717 are compositionally biased toward low complexity. The segment covering proline 1723–alanine 1732 has biased composition (polar residues). The span at proline 1733 to glutamate 1747 shows a compositional bias: basic and acidic residues. The interval serine 1761–lysine 1951 is thioesterase (TE) domain.

It functions in the pathway secondary metabolite biosynthesis. Functionally, non-reducing polyketide synthase; part of the gene cluster that mediates the biosynthesis of hypothemycin, a resorcylic acid lactone (RAL) that irreversibly inhibits a subset of protein kinases with a conserved cysteine in the ATP binding site such as human ERK2. The first step is performed by both PKSs hmp3 and hmp8 and leads to the production of 7',8'-dehydrozearalenol (DHZ). The highly reducing PKS hpm8 synthesizes the reduced hexaketide (7S,11S,2E,8E)-7,11-dihydroxy-dodeca-2,8-dienoate, which is transferred downstream to the non-reducing PKS hpm3. Hpm3 then extends the reduced hexaketide to a nonaketide, after which regioselective cyclization and macrolactonization affords DHZ. The next step is the conversion of DHZ into aigialomycin C and is performed by the O-methyltransferase hmp5, the FAD-binding monooxygenase hmp7, and the cytochrome P450 monooxygenase hmp1. The wide substrate tolerance of the hmp5 and hmp7 implies that the reactions from DHZ to aigialomycin C can occur in any order. The steps from aigialomycin C to hypothemycin are less well established. The FAD-linked oxidoreductase hmp9 presumably catalyzes oxidation of the C-6' hydroxyl to a ketone. The timing of this oxidation is important, since the resulting enone functional group is a Michael acceptor that can react spontaneously with glutathione, an abundant metabolite in fungal cells. The glutathione S-transferase hmp2 catalyzes cis-trans isomerization of the 7',8' double bond with equilibrium favoring the trans isomer. The hpm6-encoded transporter might preferentially pump hypothemycin out of the cell relative to the trans isomer aigialomycin A. The cis-to-trans isomerization may be coupled with C-4' hydroxylation, since all known hypothemycin analogs containing the enone functional group also have hydroxyl groups at both C-4' and C-5'. The protein is Non-reducing polyketide synthase hmp3 of Hypomyces subiculosus (Nectria subiculosa).